The following is a 596-amino-acid chain: Probable ATP-dependent RNA helicase DDX52 (596 aa).

Lysine 15 carries the N6-acetyllysine modification. Serine 39 carries the phosphoserine modification. Residues 68 to 94 (LPDEEKTEESQIERKKQNRKKKKITSE) are disordered. Residues 163 to 191 (QLDQEYKINSRLLQNILDAGFQTPTPIQM) carry the Q motif motif. In terms of domain architecture, Helicase ATP-binding spans 194-372 (IPVMLHGREL…RLNLDSVITV (179 aa)). 207-214 (APTGSGKT) lines the ATP pocket. The short motif at 316–319 (DESD) is the DEAD box element. Residues 383 to 544 (TVEQELLFVG…PVPEYIKGFQ (162 aa)) form the Helicase C-terminal domain. Positions 575–596 (AKDKRKKVTGQNKKKVAPEDKS) are disordered. The span at 577-589 (DKRKKVTGQNKKK) shows a compositional bias: basic residues.

It belongs to the DEAD box helicase family. DDX52/ROK1 subfamily.

It localises to the nucleus. It is found in the nucleolus. It catalyses the reaction ATP + H2O = ADP + phosphate + H(+). The sequence is that of Probable ATP-dependent RNA helicase DDX52 (DDX52) from Bos taurus (Bovine).